Consider the following 364-residue polypeptide: DNA replication and repair protein RecF (364 aa).

An ATP-binding site is contributed by 30 to 37 (GENGSGKT).

Belongs to the RecF family.

It localises to the cytoplasm. Functionally, the RecF protein is involved in DNA metabolism; it is required for DNA replication and normal SOS inducibility. RecF binds preferentially to single-stranded, linear DNA. It also seems to bind ATP. The sequence is that of DNA replication and repair protein RecF from Pseudoalteromonas translucida (strain TAC 125).